We begin with the raw amino-acid sequence, 555 residues long: Esterase-5A (555 aa).

The signal sequence occupies residues 1 to 19; that stretch reads MHLVRWLICLIQLWIQLGA. The cysteines at positions 87 and 106 are disulfide-linked. Residues Asn-95 and Asn-116 are each glycosylated (N-linked (GlcNAc...) asparagine). Catalysis depends on Ser-210, which acts as the Acyl-ester intermediate. An intrachain disulfide couples Cys-262 to Cys-274. Asn-479 and Asn-510 each carry an N-linked (GlcNAc...) asparagine glycan. Cys-518 and Cys-539 form a disulfide bridge.

It belongs to the type-B carboxylesterase/lipase family.

The protein localises to the secreted. It catalyses the reaction a carboxylic ester + H2O = an alcohol + a carboxylate + H(+). The chain is Esterase-5A (Est-5A) from Drosophila miranda (Fruit fly).